A 97-amino-acid polypeptide reads, in one-letter code: uncharacterized protein (97 aa).

This is an uncharacterized protein from Escherichia coli (strain K12).